The chain runs to 343 residues: Transmembrane protein 120A (343 aa).

Topologically, residues 1–132 (MHPPPPGPLG…KQAKFAYKDE (132 aa)) are cytoplasmic. Lys130 provides a ligand contact to CoA. Residues 133–152 (YEKFKLYLTIILILISFTCR) traverse the membrane as a helical segment. Topologically, residues 153 to 158 (FLLNSR) are extracellular. Residues 159 to 177 (VTDAAFNFLLVWYYCTLTI) traverse the membrane as a helical segment. Residues 178-190 (RESILINNGSRIK) lie on the Cytoplasmic side of the membrane. 2 residues coordinate CoA: Ser187 and Arg188. Residues 191-209 (GWWVFHHYVSTFLSGVMLT) form a helical membrane-spanning segment. Over 210–218 (WPDGLMYQK) the chain is Extracellular. Residues 219–240 (FRNQFLSFSMYQSFVQFLQYYY) traverse the membrane as a helical segment. CoA contacts are provided by Gln237, Tyr240, Gln241, and His283. The Cytoplasmic portion of the chain corresponds to 241–270 (QSGCLYRLRALGERHTMDLTVEGFQSWMWR). Residues 271–294 (GLTFLLPFLFFGHFWQLFNALTLF) traverse the membrane as a helical segment. Over 295–304 (NLARDPECKE) the chain is Extracellular. The helical transmembrane segment at 305–330 (WQVLMCGFPFLLLFLGNFFTTLRVVH) threads the bilayer. Residues 331–343 (QKFHNQLHGSKKE) are Cytoplasmic-facing. Residue Lys332 participates in CoA binding.

It belongs to the TMEM120 family. In terms of assembly, homodimer. Forms heterooligomer with TMEM120B. Interacts with PKD2; TMEM120A inhibits PKD2 channel activity through the physical association of PKD2 with TMEM120A.

It localises to the cell membrane. The protein localises to the nucleus inner membrane. The protein resides in the endoplasmic reticulum. In terms of biological role, multifunctional protein involved in mechanosensation, and plays an essential role in lipid metabolism and adipocyte differentiation. May function as an ion channel involved in sensing mechanical stimuli. Mediates the mechanosensitivity of the PKD2-TMEM120A channel complex through direct physical interaction. TMEM120A seems to affect mechanosensation by inhibiting PIEZO2 channels, possibly by altering cellular lipid content. TMEM120A is structurally similar to a lipid-modifying enzyme, ELOVL7, and contains a bound coenzyme A molecule, which suggests it might function as an enzyme in lipid metabolism. Additionnaly, implicated in innate immune response against Zika virus. Acts as a key activator of the antiviral signaling involving STING1. This is Transmembrane protein 120A from Bos taurus (Bovine).